Consider the following 374-residue polypeptide: D-amino-acid oxidase 3 (374 aa).

The signal sequence occupies residues 1 to 19; that stretch reads MVKYDAIILGSGVLGLSIA. Positions 11, 14, 34, 35, 46, 47, and 51 each coordinate FAD. An N-linked (GlcNAc...) asparagine glycan is attached at N180. The cysteines at positions 214 and 271 are disulfide-linked. (R)-lactate is bound by residues Y229, Y246, and R296. Anthranilate-binding residues include Y229, Y246, and R296. Positions 296, 342, 345, 346, and 347 each coordinate FAD. The short motif at 372–374 is the Microbody targeting signal element; that stretch reads AKL.

The protein belongs to the DAMOX/DASOX family. It depends on FAD as a cofactor.

The protein resides in the peroxisome matrix. It carries out the reaction a D-alpha-amino acid + O2 + H2O = a 2-oxocarboxylate + H2O2 + NH4(+). In terms of biological role, catalyzes the oxidative deamination of D-amino acids with broad substrate specificity. Enables the organism to utilize D-amino acids as a source of nutrients. Enables the organism to utilize D-asparate and D-glutamate as a nitrogen source and may also contribute to utlization of D-tryptophan, D-tyrosine and D-asparagine as a nitrogen source. Protects the organism from the toxicity of D-amino acids, including from D-glutamate. May play a role in its interaction with the host. In Cryptococcus deuterogattii (strain R265) (Cryptococcus gattii VGII (strain R265)), this protein is D-amino-acid oxidase 3.